The chain runs to 215 residues: Probable phosphoglycerate mutase GpmB (215 aa).

Residues 8–15, 21–22, Arg-58, Arg-60, 82–85, and 151–152 each bind substrate; these read RHGESEWN, QG, ELHM, and GI. His-9 serves as the catalytic Tele-phosphohistidine intermediate. The active-site Proton donor/acceptor is Glu-82.

This sequence belongs to the phosphoglycerate mutase family. GpmB subfamily.

It catalyses the reaction (2R)-2-phosphoglycerate = (2R)-3-phosphoglycerate. It functions in the pathway carbohydrate degradation; glycolysis; pyruvate from D-glyceraldehyde 3-phosphate: step 3/5. The polypeptide is Probable phosphoglycerate mutase GpmB (Photorhabdus laumondii subsp. laumondii (strain DSM 15139 / CIP 105565 / TT01) (Photorhabdus luminescens subsp. laumondii)).